Reading from the N-terminus, the 87-residue chain is U3-theraphotoxin-Hhn1a 13 (87 aa).

A signal peptide spans 1–24 (MVNMKASMFLTSAGLVPLFVVCYA). The propeptide occupies 25-52 (SESEEKEFPKEMLSSIFAVDNDFKQEER). 3 disulfides stabilise this stretch: Cys-54–Cys-67, Cys-61–Cys-72, and Cys-66–Cys-79.

It belongs to the neurotoxin 10 (Hwtx-1) family. 51 (Hntx-8) subfamily. Hntx-8 sub-subfamily. In terms of tissue distribution, expressed by the venom gland.

The protein resides in the secreted. In terms of biological role, ion channel inhibitor. In Cyriopagopus hainanus (Chinese bird spider), this protein is U3-theraphotoxin-Hhn1a 13.